We begin with the raw amino-acid sequence, 205 residues long: Small ribosomal subunit protein uS4 (205 aa).

A disordered region spans residues 18–46 (NIWGRPKSPVNRREYGPGQHGQRRKGKLS). Residues 94 to 154 (RRLDAVVYRA…EASKQLAHVL (61 aa)) enclose the S4 RNA-binding domain.

The protein belongs to the universal ribosomal protein uS4 family. Part of the 30S ribosomal subunit. Contacts protein S5. The interaction surface between S4 and S5 is involved in control of translational fidelity.

One of the primary rRNA binding proteins, it binds directly to 16S rRNA where it nucleates assembly of the body of the 30S subunit. In terms of biological role, with S5 and S12 plays an important role in translational accuracy. The chain is Small ribosomal subunit protein uS4 from Bradyrhizobium diazoefficiens (strain JCM 10833 / BCRC 13528 / IAM 13628 / NBRC 14792 / USDA 110).